The following is a 182-amino-acid chain: Adenine phosphoribosyltransferase (182 aa).

The protein belongs to the purine/pyrimidine phosphoribosyltransferase family. Homodimer.

It localises to the cytoplasm. It carries out the reaction AMP + diphosphate = 5-phospho-alpha-D-ribose 1-diphosphate + adenine. The protein operates within purine metabolism; AMP biosynthesis via salvage pathway; AMP from adenine: step 1/1. In terms of biological role, catalyzes a salvage reaction resulting in the formation of AMP, that is energically less costly than de novo synthesis. The polypeptide is Adenine phosphoribosyltransferase (Streptomyces galbus).